The following is a 463-amino-acid chain: Stress-activated protein kinase jnk-1 (463 aa).

The span at 1–12 shows a compositional bias: polar residues; that stretch reads MEERLSTTSSYP. The interval 1 to 23 is disordered; that stretch reads MEERLSTTSSYPSHPGRSVEEDH. In terms of domain architecture, Protein kinase spans 119-412; sequence YQNLRLIGSG…ISVDDALRHP (294 aa). ATP-binding positions include 126-131 and Lys148; that span reads GSGAQG. The active-site Proton acceptor is the Asp244. A Phosphothreonine modification is found at Thr276. A TXY motif is present at residues 276–278; the sequence is TPY. The residue at position 278 (Tyr278) is a Phosphotyrosine.

It belongs to the protein kinase superfamily. CMGC Ser/Thr protein kinase family. MAP kinase subfamily. Binds to the scaffolding protein, unc-16. Unc-16 also binds other components of the JNK signaling pathway. Interacts with daf-16. Mg(2+) serves as cofactor. Dually phosphorylated on Thr-276 and Tyr-278, which activates the enzyme. In terms of tissue distribution, expressed in most neurons, including nerve ring, head ganglions, dorsal and ventral nerve cords and tail ganglions. The Thr-276/Tyr-278 phosphorylated form is present in the nerve ring upon heat exposure.

It localises to the cytoplasm. Its subcellular location is the perikaryon. It is found in the cell projection. The protein resides in the axon. The catalysed reaction is L-seryl-[protein] + ATP = O-phospho-L-seryl-[protein] + ADP + H(+). The enzyme catalyses L-threonyl-[protein] + ATP = O-phospho-L-threonyl-[protein] + ADP + H(+). With respect to regulation, activated by threonine and tyrosine phosphorylation by either of the dual specificity kinases, jkk-1 and mek-1. Serine/threonine-protein kinase which responds to activation by environmental stress by phosphorylating a number of transcription factors such as daf-16, and thus regulates transcriptional activity. By phosphorylating daf-16, plays a role in daf-16 nuclear translocation in intestinal cells in response to environmental stresses such as heat and oxidative stresses. Downstream of jkk-1, may coordinate locomotion via type-D GABAergic motoneurons and regulates synaptic vesicle transport in conjunction with unc-16. Independently of jkk-1, may regulate some mechanosensory responses, such as response to touch. Independently of jkk-1 and downstream of mek-1, plays a role in resistance to heavy metals, such as Cu(2+) or Cd(2+). Regulates germline cell apoptosis in response to heavy metals such as Cu(2+) and arsenite. Required for dopaminergic CEP neuron degeneration in response to Mn(2+). Required for normal sleep bout quantity and arousal thresholds during the transition from the last larval stage to adulthood in well-fed animals. Downstream of jkk-1 but independently of mek-1, positively regulates lifespan. The sequence is that of Stress-activated protein kinase jnk-1 (jnk-1) from Caenorhabditis elegans.